Here is a 164-residue protein sequence, read N- to C-terminus: Small ribosomal subunit protein uS9 (164 aa).

The protein belongs to the universal ribosomal protein uS9 family.

This is Small ribosomal subunit protein uS9 from Rickettsia bellii (strain OSU 85-389).